A 459-amino-acid polypeptide reads, in one-letter code: V-type ATP synthase beta chain (459 aa).

It belongs to the ATPase alpha/beta chains family.

Its function is as follows. Produces ATP from ADP in the presence of a proton gradient across the membrane. The V-type beta chain is a regulatory subunit. In Thermoanaerobacter pseudethanolicus (strain ATCC 33223 / 39E) (Clostridium thermohydrosulfuricum), this protein is V-type ATP synthase beta chain.